A 264-amino-acid polypeptide reads, in one-letter code: 3-methyl-2-oxobutanoate hydroxymethyltransferase (264 aa).

Mg(2+) contacts are provided by Asp-45 and Asp-84. Residues 45–46 (DS), Asp-84, and Lys-112 each bind 3-methyl-2-oxobutanoate. Glu-114 contributes to the Mg(2+) binding site. The Proton acceptor role is filled by Glu-181.

Belongs to the PanB family. Homodecamer; pentamer of dimers. The cofactor is Mg(2+).

The protein localises to the cytoplasm. The enzyme catalyses 3-methyl-2-oxobutanoate + (6R)-5,10-methylene-5,6,7,8-tetrahydrofolate + H2O = 2-dehydropantoate + (6S)-5,6,7,8-tetrahydrofolate. It participates in cofactor biosynthesis; (R)-pantothenate biosynthesis; (R)-pantoate from 3-methyl-2-oxobutanoate: step 1/2. Functionally, catalyzes the reversible reaction in which hydroxymethyl group from 5,10-methylenetetrahydrofolate is transferred onto alpha-ketoisovalerate to form ketopantoate. In Erwinia tasmaniensis (strain DSM 17950 / CFBP 7177 / CIP 109463 / NCPPB 4357 / Et1/99), this protein is 3-methyl-2-oxobutanoate hydroxymethyltransferase.